We begin with the raw amino-acid sequence, 195 residues long: Imidazoleglycerol-phosphate dehydratase (195 aa).

Belongs to the imidazoleglycerol-phosphate dehydratase family.

It localises to the cytoplasm. The catalysed reaction is D-erythro-1-(imidazol-4-yl)glycerol 3-phosphate = 3-(imidazol-4-yl)-2-oxopropyl phosphate + H2O. It participates in amino-acid biosynthesis; L-histidine biosynthesis; L-histidine from 5-phospho-alpha-D-ribose 1-diphosphate: step 6/9. The protein is Imidazoleglycerol-phosphate dehydratase of Citrifermentans bemidjiense (strain ATCC BAA-1014 / DSM 16622 / JCM 12645 / Bem) (Geobacter bemidjiensis).